A 125-amino-acid chain; its full sequence is Small ribosomal subunit protein uS12 (125 aa).

The tract at residues 1–26 is disordered; sequence MPTINQLVRKSRKTVKAQSDSPALKN. Asp89 is modified (3-methylthioaspartic acid).

It belongs to the universal ribosomal protein uS12 family. In terms of assembly, part of the 30S ribosomal subunit. Contacts proteins S8 and S17. May interact with IF1 in the 30S initiation complex.

With S4 and S5 plays an important role in translational accuracy. Its function is as follows. Interacts with and stabilizes bases of the 16S rRNA that are involved in tRNA selection in the A site and with the mRNA backbone. Located at the interface of the 30S and 50S subunits, it traverses the body of the 30S subunit contacting proteins on the other side and probably holding the rRNA structure together. The combined cluster of proteins S8, S12 and S17 appears to hold together the shoulder and platform of the 30S subunit. The polypeptide is Small ribosomal subunit protein uS12 (Clostridium tetani (strain Massachusetts / E88)).